The chain runs to 165 residues: LOB domain-containing protein 21 (165 aa).

The region spanning 10–111 (SSCAACKLLK…HDLAVARTRL (102 aa)) is the LOB domain.

It belongs to the LOB domain-containing protein family.

The chain is LOB domain-containing protein 21 (LBD21) from Arabidopsis thaliana (Mouse-ear cress).